We begin with the raw amino-acid sequence, 504 residues long: Glutamate--tRNA ligase (504 aa).

Positions 27 to 37 (PSPTGTPHVGL) match the 'HIGH' region motif. The 'KMSKS' region motif lies at 271-275 (KLSKR). Lys274 provides a ligand contact to ATP.

This sequence belongs to the class-I aminoacyl-tRNA synthetase family. Glutamate--tRNA ligase type 1 subfamily. In terms of assembly, monomer.

The protein resides in the cytoplasm. The catalysed reaction is tRNA(Glu) + L-glutamate + ATP = L-glutamyl-tRNA(Glu) + AMP + diphosphate. In terms of biological role, catalyzes the attachment of glutamate to tRNA(Glu) in a two-step reaction: glutamate is first activated by ATP to form Glu-AMP and then transferred to the acceptor end of tRNA(Glu). This is Glutamate--tRNA ligase from Arthrobacter sp. (strain FB24).